A 368-amino-acid polypeptide reads, in one-letter code: DNA-directed RNA polymerase subunit alpha (368 aa).

The tract at residues 1 to 231 (MLWKGFQKPK…DHMNIFINFE (231 aa)) is alpha N-terminal domain (alpha-NTD). The tract at residues 243–368 (KPEIRNENLN…GFGGDNNPGF (126 aa)) is alpha C-terminal domain (alpha-CTD).

This sequence belongs to the RNA polymerase alpha chain family. As to quaternary structure, homodimer. The RNAP catalytic core consists of 2 alpha, 1 beta, 1 beta' and 1 omega subunit. When a sigma factor is associated with the core the holoenzyme is formed, which can initiate transcription.

It carries out the reaction RNA(n) + a ribonucleoside 5'-triphosphate = RNA(n+1) + diphosphate. Functionally, DNA-dependent RNA polymerase catalyzes the transcription of DNA into RNA using the four ribonucleoside triphosphates as substrates. This chain is DNA-directed RNA polymerase subunit alpha, found in Koribacter versatilis (strain Ellin345).